A 303-amino-acid polypeptide reads, in one-letter code: Acetylglutamate kinase (303 aa).

Substrate is bound by residues 75–76 (GG), arginine 97, and asparagine 194.

It belongs to the acetylglutamate kinase family. ArgB subfamily.

It localises to the cytoplasm. The catalysed reaction is N-acetyl-L-glutamate + ATP = N-acetyl-L-glutamyl 5-phosphate + ADP. It participates in amino-acid biosynthesis; L-arginine biosynthesis; N(2)-acetyl-L-ornithine from L-glutamate: step 2/4. Catalyzes the ATP-dependent phosphorylation of N-acetyl-L-glutamate. The sequence is that of Acetylglutamate kinase from Gloeobacter violaceus (strain ATCC 29082 / PCC 7421).